Here is a 139-residue protein sequence, read N- to C-terminus: Acidic phospholipase A2 Ts-A4 (139 aa).

The first 16 residues, 1–16 (MRTLWILAVLLVGVEG), serve as a signal peptide directing secretion. Intrachain disulfides connect cysteine 42–cysteine 132, cysteine 44–cysteine 60, cysteine 59–cysteine 111, cysteine 65–cysteine 139, cysteine 66–cysteine 104, cysteine 73–cysteine 97, and cysteine 91–cysteine 102. 3 residues coordinate Ca(2+): tyrosine 43, glycine 45, and glycine 47. The active site involves histidine 63. Residue aspartate 64 coordinates Ca(2+). The active site involves aspartate 105.

Ca(2+) serves as cofactor. As to expression, expressed by the venom gland.

It is found in the secreted. It carries out the reaction a 1,2-diacyl-sn-glycero-3-phosphocholine + H2O = a 1-acyl-sn-glycero-3-phosphocholine + a fatty acid + H(+). Its function is as follows. PLA2 catalyzes the calcium-dependent hydrolysis of the 2-acyl groups in 3-sn-phosphoglycerides. This Trimeresurus stejnegeri (Chinese green tree viper) protein is Acidic phospholipase A2 Ts-A4.